A 377-amino-acid chain; its full sequence is tRNA/tmRNA (uracil-C(5))-methyltransferase (377 aa).

Positions 199, 227, 232, 248, and 308 each coordinate S-adenosyl-L-methionine. Cys333 serves as the catalytic Nucleophile. The Proton acceptor role is filled by Glu367.

Belongs to the class I-like SAM-binding methyltransferase superfamily. RNA M5U methyltransferase family. TrmA subfamily.

It carries out the reaction uridine(54) in tRNA + S-adenosyl-L-methionine = 5-methyluridine(54) in tRNA + S-adenosyl-L-homocysteine + H(+). It catalyses the reaction uridine(341) in tmRNA + S-adenosyl-L-methionine = 5-methyluridine(341) in tmRNA + S-adenosyl-L-homocysteine + H(+). Its function is as follows. Dual-specificity methyltransferase that catalyzes the formation of 5-methyluridine at position 54 (m5U54) in all tRNAs, and that of position 341 (m5U341) in tmRNA (transfer-mRNA). This chain is tRNA/tmRNA (uracil-C(5))-methyltransferase, found in Aeromonas salmonicida (strain A449).